Consider the following 268-residue polypeptide: MLQYPHINPVALQLGPIKIHWYGLMYLLGIFAGWYLTRYRAKVKPWAPIKPEQVGDLTFYVALGVILGGRIGYIIFYNLPYYFHNPSQMFFLWDGGMSFHGGFIGVLIAFALFARKIGANFFDLGEFVAPVIPIGLGAGRIGNFINGELWGKVTDSPLGMVFPTGGPLPRYPSQLFEFFFEGVVLFSVLWLVTIKKRPRYLVLGLFMFLYGCARFICEFFRQPDPQYGYIFFNWMTMGQILSIPMILLGAVILIAVFIKTRKNKCENI.

The next 4 membrane-spanning stretches (helical) occupy residues 14-34, 57-77, 90-110, and 117-137; these read LGPIKIHWYGLMYLLGIFAGW, LTFYVALGVILGGRIGYIIFY, FFLWDGGMSFHGGFIGVLIAF, and IGANFFDLGEFVAPVIPIGLG. R140 serves as a coordination point for a 1,2-diacyl-sn-glycero-3-phospho-(1'-sn-glycerol). 3 helical membrane passes run 174 to 194, 200 to 220, and 238 to 258; these read QLFEFFFEGVVLFSVLWLVTI, YLVLGLFMFLYGCARFICEFF, and GQILSIPMILLGAVILIAVFI.

The protein belongs to the Lgt family.

Its subcellular location is the cell inner membrane. It carries out the reaction L-cysteinyl-[prolipoprotein] + a 1,2-diacyl-sn-glycero-3-phospho-(1'-sn-glycerol) = an S-1,2-diacyl-sn-glyceryl-L-cysteinyl-[prolipoprotein] + sn-glycerol 1-phosphate + H(+). It participates in protein modification; lipoprotein biosynthesis (diacylglyceryl transfer). In terms of biological role, catalyzes the transfer of the diacylglyceryl group from phosphatidylglycerol to the sulfhydryl group of the N-terminal cysteine of a prolipoprotein, the first step in the formation of mature lipoproteins. The chain is Phosphatidylglycerol--prolipoprotein diacylglyceryl transferase from Francisella tularensis subsp. novicida (strain U112).